The following is a 686-amino-acid chain: Amyloid-beta-like protein (686 aa).

Positions 1 to 21 (MTVGKLMIGLLIPILVATVYA) are cleaved as a signal peptide. Over 22-621 (EGSPAGSKRH…VERSASSVFQ (600 aa)) the chain is Extracellular. The tract at residues 32–125 (EKFIPMVAFS…PYHCIDGEFH (94 aa)) is GFLD subdomain. Positions 32 to 197 (EKFIPMVAFS…TGVEFVCCPN (166 aa)) constitute an E1 domain. 6 disulfides stabilise this stretch: cysteine 42-cysteine 65, cysteine 76-cysteine 119, cysteine 101-cysteine 108, cysteine 135-cysteine 195, cysteine 146-cysteine 182, and cysteine 160-cysteine 194. The N-linked (GlcNAc...) asparagine glycan is linked to asparagine 84. Residues 133 to 197 (HDCQFSHVNS…TGVEFVCCPN (65 aa)) form a cuBD subdomain region. A glycan (N-linked (GlcNAc...) asparagine) is linked at asparagine 201. Positions 201 to 245 (NKTDVQKTKEDEDDDDDEDDAYEDDYSEESDEKDEEEPSSQDPYF) are disordered. Over residues 211–239 (DEDDDDDEDDAYEDDYSEESDEKDEEEPS) the composition is skewed to acidic residues. In terms of domain architecture, E2 spans 240-440 (SQDPYFKIAN…KYVRPIAVTY (201 aa)). An N-linked (GlcNAc...) asparagine glycan is attached at asparagine 249. Residues 252-255 (NEHD) and histidine 382 contribute to the heparin site. Asparagine 417 carries N-linked (GlcNAc...) asparagine glycosylation. Disordered stretches follow at residues 479–526 (PTTT…DMKK) and 550–585 (KLVE…NIKE). The span at 500-516 (SDSEEEADEYYEDEDDE) shows a compositional bias: acidic residues. Over residues 517–526 (QVKKTPDMKK) the composition is skewed to basic and acidic residues. Over residues 558–567 (TDDEDDDEDS) the composition is skewed to acidic residues. Residues 622 to 642 (PYVLASAMFITAICIIAFAIT) traverse the membrane as a helical segment. Topologically, residues 643–686 (NARRRRAMRGFIEVDVYTPEERHVAGMQVNGYENPTYSFFDSKA) are cytoplasmic. The YENPXY motif motif lies at 674–679 (YENPTY).

Belongs to the APP family. As to quaternary structure, interacts (via cytoplasmic domain) with feh-1 (via PID 2 domain). Post-translationally, extracellular region is proteolytically cleaved. In terms of tissue distribution, expressed in the head, pharynx, spermatheca, uterus, vulva, tail and ventral neurons. Specifically expressed in nerve ring interneurons, the ventral cord, socket and amphids in the head, with strong expression in junctional cells, including the pharyngeal intestinal valve and uterine seam junction, and the excretory cell and weak expression in epidermal epithelial cells, including hyp7 cells, vulval cells, rectal valve cells, pharyngeal arcade cells and the tail hypodermis.

Its subcellular location is the membrane. It is found in the early endosome. Required for normal developmental progression throughout all life stages. Specifically required for the molt stage during all larval transitions and morphogenesis. Acts with heterochronic genes, including members of the let-7 family, to regulate larval stage to adult transition. Acts synergistically with acn-1 in let-7 regulated postembryonic cell division of hypodermal seam cells. Acts in multiple pathways to influence daf-12 and daf-16 activity to in turn regulate physiological and reproductive processes such as body size and egg-laying. May play a role in neurotransmission. This is Amyloid-beta-like protein from Caenorhabditis elegans.